The chain runs to 1086 residues: Transcription initiation factor TFIID subunit 2 (1086 aa).

Polar residues predominate over residues 1-11 (MDFSEASTSGD). 2 disordered regions span residues 1-53 (MDFS…PPPV) and 1064-1086 (GYEA…NLMQ). Composition is skewed to pro residues over residues 19–36 (PFPP…PPLA) and 44–53 (APPPLQPPPV). The segment covering 1067–1078 (AARRSPPRRDFG) has biased composition (basic and acidic residues).

The protein belongs to the TAF2 family. As to quaternary structure, component of the TFIID basal transcription factor complex, composed of TATA-box-binding protein tbp-1, and a number of TBP-associated factors (TAFs).

The protein localises to the nucleus. The TFIID basal transcription factor complex plays a major role in the initiation of RNA polymerase II (Pol II)-dependent transcription. TFIID recognizes and binds promoters via its subunit tbp-1, a TATA-box-binding protein, and promotes assembly of the pre-initiation complex (PIC). The TFIID complex consists of tbp-1 and TBP-associated factors (TAFs), including taf-2. May regulate RNA polymerase II activity and thereby may control transcription initiation by RNA polymerase II. The protein is Transcription initiation factor TFIID subunit 2 of Caenorhabditis elegans.